A 500-amino-acid chain; its full sequence is UDP-N-acetylmuramoyl-L-alanyl-D-glutamate--2,6-diaminopimelate ligase (500 aa).

S38 contributes to the UDP-N-acetyl-alpha-D-muramoyl-L-alanyl-D-glutamate binding site. 118 to 124 (GTNGKTS) serves as a coordination point for ATP. UDP-N-acetyl-alpha-D-muramoyl-L-alanyl-D-glutamate is bound by residues 160 to 161 (TT), S187, and R195. At K227 the chain carries N6-carboxylysine. Residues R395, 419 to 422 (DNPR), G471, and E475 each bind meso-2,6-diaminopimelate. The Meso-diaminopimelate recognition motif motif lies at 419–422 (DNPR).

This sequence belongs to the MurCDEF family. MurE subfamily. Mg(2+) serves as cofactor. Carboxylation is probably crucial for Mg(2+) binding and, consequently, for the gamma-phosphate positioning of ATP.

Its subcellular location is the cytoplasm. The catalysed reaction is UDP-N-acetyl-alpha-D-muramoyl-L-alanyl-D-glutamate + meso-2,6-diaminopimelate + ATP = UDP-N-acetyl-alpha-D-muramoyl-L-alanyl-gamma-D-glutamyl-meso-2,6-diaminopimelate + ADP + phosphate + H(+). It functions in the pathway cell wall biogenesis; peptidoglycan biosynthesis. In terms of biological role, catalyzes the addition of meso-diaminopimelic acid to the nucleotide precursor UDP-N-acetylmuramoyl-L-alanyl-D-glutamate (UMAG) in the biosynthesis of bacterial cell-wall peptidoglycan. This Leptospira borgpetersenii serovar Hardjo-bovis (strain L550) protein is UDP-N-acetylmuramoyl-L-alanyl-D-glutamate--2,6-diaminopimelate ligase.